Consider the following 362-residue polypeptide: 2-aminoethylphosphonate--pyruvate transaminase (362 aa).

Residue Lys-193 is modified to N6-(pyridoxal phosphate)lysine.

Belongs to the class-V pyridoxal-phosphate-dependent aminotransferase family. PhnW subfamily. In terms of assembly, homodimer. Pyridoxal 5'-phosphate serves as cofactor.

The enzyme catalyses (2-aminoethyl)phosphonate + pyruvate = phosphonoacetaldehyde + L-alanine. In terms of biological role, involved in phosphonate degradation. This chain is 2-aminoethylphosphonate--pyruvate transaminase, found in Bacteroides fragilis (strain ATCC 25285 / DSM 2151 / CCUG 4856 / JCM 11019 / LMG 10263 / NCTC 9343 / Onslow / VPI 2553 / EN-2).